The chain runs to 607 residues: Heterocyst differentiation ATP-binding protein HepA (607 aa).

Positions 32–330 (AILAVIFSFL…INGTVAFLST (299 aa)) constitute an ABC transmembrane type-1 domain. The next 5 membrane-spanning stretches (helical) occupy residues 33 to 53 (ILAVIFSFLAASFEGVSIGFL), 77 to 97 (ILAADAWPIPPIYRISLLILL), 163 to 182 (FSGLAFVLTRIMTVCVYFVV), 186 to 208 (ISWQLSIISVLIFLLLAVGLSTL), and 290 to 310 (IVISFATFTLPVASLLTFFFV). Residues 364-598 (IDLVSVDFGY…RGKLWKYHQM (235 aa)) form the ABC transporter domain. An ATP-binding site is contributed by 397–404 (GASGAGKT).

This sequence belongs to the ABC transporter superfamily.

The protein resides in the cell inner membrane. Functionally, acts early in the process of morphological differentiation of heterocysts. The protein is Heterocyst differentiation ATP-binding protein HepA (hepA) of Nostoc sp. (strain PCC 7120 / SAG 25.82 / UTEX 2576).